Consider the following 121-residue polypeptide: Large ribosomal subunit protein bL19 (121 aa).

The protein belongs to the bacterial ribosomal protein bL19 family.

In terms of biological role, this protein is located at the 30S-50S ribosomal subunit interface and may play a role in the structure and function of the aminoacyl-tRNA binding site. This is Large ribosomal subunit protein bL19 from Gloeobacter violaceus (strain ATCC 29082 / PCC 7421).